The chain runs to 729 residues: Fatty acid oxidation complex subunit alpha (729 aa).

The enoyl-CoA hydratase/isomerase stretch occupies residues 1–189; that stretch reads MLYKGDTLYL…KIGLVDGVVK (189 aa). Asp-296 contacts substrate. The segment at 311 to 729 is 3-hydroxyacyl-CoA dehydrogenase; the sequence is ETPKQAAVLG…ARPVGSLKTA (419 aa). NAD(+) is bound by residues Met-324, Asp-343, 400 to 402, Lys-407, and Ser-429; that span reads VVE. His-450 acts as the For 3-hydroxyacyl-CoA dehydrogenase activity in catalysis. Asn-453 is an NAD(+) binding site. Residues Asn-500 and Tyr-660 each coordinate substrate. The disordered stretch occupies residues 708–729; that stretch reads RHNEPYYPPVEPARPVGSLKTA.

In the N-terminal section; belongs to the enoyl-CoA hydratase/isomerase family. This sequence in the C-terminal section; belongs to the 3-hydroxyacyl-CoA dehydrogenase family. As to quaternary structure, heterotetramer of two alpha chains (FadB) and two beta chains (FadA).

It carries out the reaction a (3S)-3-hydroxyacyl-CoA + NAD(+) = a 3-oxoacyl-CoA + NADH + H(+). The catalysed reaction is a (3S)-3-hydroxyacyl-CoA = a (2E)-enoyl-CoA + H2O. The enzyme catalyses a 4-saturated-(3S)-3-hydroxyacyl-CoA = a (3E)-enoyl-CoA + H2O. It catalyses the reaction (3S)-3-hydroxybutanoyl-CoA = (3R)-3-hydroxybutanoyl-CoA. It carries out the reaction a (3Z)-enoyl-CoA = a 4-saturated (2E)-enoyl-CoA. The catalysed reaction is a (3E)-enoyl-CoA = a 4-saturated (2E)-enoyl-CoA. It functions in the pathway lipid metabolism; fatty acid beta-oxidation. Involved in the aerobic and anaerobic degradation of long-chain fatty acids via beta-oxidation cycle. Catalyzes the formation of 3-oxoacyl-CoA from enoyl-CoA via L-3-hydroxyacyl-CoA. It can also use D-3-hydroxyacyl-CoA and cis-3-enoyl-CoA as substrate. This Salmonella typhimurium (strain LT2 / SGSC1412 / ATCC 700720) protein is Fatty acid oxidation complex subunit alpha.